The chain runs to 195 residues: MSAADVEYRVRHQAFWFVACLAVLVAQIIAEYLMGRVPICACGYVKLWEGGVNTSGNSQHLSDWYTPSHIIHGFLFYGLGYLILRRKPLAARLLLALMIESGWELLENSPLIIDRYRTATMALDYYGDSILNSAMDTVFMCLGFFFAARAPVALTVVIAIFFEIFTGYVIRDNLTLNVLMLIWPVEAIKVWQGGL.

4 helical membrane passes run 14–34 (AFWFVACLAVLVAQIIAEYLM), 64–84 (WYTPSHIIHGFLFYGLGYLIL), 128–148 (DSILNSAMDTVFMCLGFFFAA), and 150–170 (APVALTVVIAIFFEIFTGYVI).

This sequence belongs to the UPF0314 family.

It localises to the cell membrane. The protein is UPF0314 protein RHE_CH03951 of Rhizobium etli (strain ATCC 51251 / DSM 11541 / JCM 21823 / NBRC 15573 / CFN 42).